The primary structure comprises 214 residues: 3-isopropylmalate dehydratase small subunit (214 aa).

This sequence belongs to the LeuD family. LeuD type 1 subfamily. In terms of assembly, heterodimer of LeuC and LeuD.

The catalysed reaction is (2R,3S)-3-isopropylmalate = (2S)-2-isopropylmalate. Its pathway is amino-acid biosynthesis; L-leucine biosynthesis; L-leucine from 3-methyl-2-oxobutanoate: step 2/4. Its function is as follows. Catalyzes the isomerization between 2-isopropylmalate and 3-isopropylmalate, via the formation of 2-isopropylmaleate. In Methylobacillus flagellatus (strain ATCC 51484 / DSM 6875 / VKM B-1610 / KT), this protein is 3-isopropylmalate dehydratase small subunit.